The following is a 115-amino-acid chain: Toxin-like structure LSTX-D2 (115 aa).

The signal sequence occupies residues 1–22 (MKVLVLFSVLFLTLFSYSSTEA). Positions 23–44 (IDEFDSDAEDDMLSLMANEQVR) are excised as a propeptide. 4 cysteine pairs are disulfide-bonded: C48/C63, C55/C72, C62/C87, and C74/C85.

Belongs to the neurotoxin 19 (CSTX) family. 01 subfamily. As to expression, expressed by the venom gland.

It localises to the secreted. The polypeptide is Toxin-like structure LSTX-D2 (Lycosa singoriensis (Wolf spider)).